A 30-amino-acid polypeptide reads, in one-letter code: Cyclotide hyen-K (30 aa).

A cross-link (cyclopeptide (Gly-Asn)) is located at residues Gly1–Asn30. 3 cysteine pairs are disulfide-bonded: Cys4/Cys20, Cys8/Cys22, and Cys13/Cys27.

Post-translationally, this is a cyclic peptide. Detected in seeds (at protein level).

Functionally, probably participates in a plant defense mechanism. The sequence is that of Cyclotide hyen-K from Pigea enneasperma (Spade flower).